The chain runs to 125 residues: Large ribosomal subunit protein bL12 (125 aa).

This sequence belongs to the bacterial ribosomal protein bL12 family. Homodimer. Part of the ribosomal stalk of the 50S ribosomal subunit. Forms a multimeric L10(L12)X complex, where L10 forms an elongated spine to which 2 to 4 L12 dimers bind in a sequential fashion. Binds GTP-bound translation factors.

Forms part of the ribosomal stalk which helps the ribosome interact with GTP-bound translation factors. Is thus essential for accurate translation. The polypeptide is Large ribosomal subunit protein bL12 (Rickettsia conorii (strain ATCC VR-613 / Malish 7)).